The sequence spans 335 residues: Transcription factor bHLH63 (335 aa).

A disordered region spans residues 110–160 (MTMNRDDLVEEGEEEKSKITEQNNGSTKSIKKMKHKAKKEENNFSNDSSKV). Residues 178–228 (QATDSHSIAERVRREKISERMKFLQDLVPGCDKITGKAGMLDEIINYVQSL) form the bHLH domain.

Homodimer. Interacts with IBH1. Binds reversibly to CRY2 after blue light illumination. As to expression, expressed constitutively in roots, leaves, and stems.

It localises to the nucleus. Functionally, transcription factor that binds DNA to G box 5'-CACGTG-3' and, to a lower extent, to E-box 5'-CANNTG-3' in vitro. Binds to chromatin DNA of the FT gene and promotes its expression, and thus triggers flowering in response to blue light. The polypeptide is Transcription factor bHLH63 (BHLH63) (Arabidopsis thaliana (Mouse-ear cress)).